Consider the following 388-residue polypeptide: Acetate kinase (388 aa).

Asparagine 14 contacts Mg(2+). Position 21 (lysine 21) interacts with ATP. Arginine 80 serves as a coordination point for substrate. The active-site Proton donor/acceptor is aspartate 137. Residues 197–201 (HLGNG), 271–273 (DFR), and 319–323 (GIGEH) contribute to the ATP site. Residue glutamate 373 participates in Mg(2+) binding.

Belongs to the acetokinase family. As to quaternary structure, homodimer. Mg(2+) serves as cofactor. Mn(2+) is required as a cofactor.

The protein resides in the cytoplasm. It carries out the reaction acetate + ATP = acetyl phosphate + ADP. It functions in the pathway metabolic intermediate biosynthesis; acetyl-CoA biosynthesis; acetyl-CoA from acetate: step 1/2. Functionally, catalyzes the formation of acetyl phosphate from acetate and ATP. Can also catalyze the reverse reaction. The chain is Acetate kinase from Mycobacterium marinum (strain ATCC BAA-535 / M).